The chain runs to 266 residues: Glucosamine-6-phosphate deaminase (266 aa).

D72 functions as the Proton acceptor; for enolization step in the catalytic mechanism. Residue D141 is the For ring-opening step of the active site. H143 functions as the Proton acceptor; for ring-opening step in the catalytic mechanism. E148 acts as the For ring-opening step in catalysis.

The protein belongs to the glucosamine/galactosamine-6-phosphate isomerase family. NagB subfamily. In terms of assembly, homohexamer.

It catalyses the reaction alpha-D-glucosamine 6-phosphate + H2O = beta-D-fructose 6-phosphate + NH4(+). The protein operates within amino-sugar metabolism; N-acetylneuraminate degradation; D-fructose 6-phosphate from N-acetylneuraminate: step 5/5. With respect to regulation, allosterically activated by N-acetylglucosamine 6-phosphate (GlcNAc6P). Catalyzes the reversible isomerization-deamination of glucosamine 6-phosphate (GlcN6P) to form fructose 6-phosphate (Fru6P) and ammonium ion. The sequence is that of Glucosamine-6-phosphate deaminase from Salmonella typhi.